A 1006-amino-acid polypeptide reads, in one-letter code: Probable sulfite reductase [NADPH] flavoprotein component (1006 aa).

The FAD-binding FR-type domain occupies 622-852; it reads EKVFTVHVRA…AVKTSVMKLP (231 aa). FAD-binding positions include 658–669 and 788–798; these read YDIGEALGVYGV and IKRREYSISSS.

The cofactor is FAD. FMN is required as a cofactor.

The catalysed reaction is hydrogen sulfide + 3 NADP(+) + 3 H2O = sulfite + 3 NADPH + 4 H(+). The protein operates within sulfur metabolism; hydrogen sulfide biosynthesis; hydrogen sulfide from sulfite (NADPH route): step 1/1. Its function is as follows. This enzyme catalyzes the 6-electron reduction of sulfite to sulfide. This is one of several activities required for the biosynthesis of L-cysteine from sulfate. This Schizosaccharomyces pombe (strain 972 / ATCC 24843) (Fission yeast) protein is Probable sulfite reductase [NADPH] flavoprotein component.